Here is a 589-residue protein sequence, read N- to C-terminus: MTNSQTVSLIGPTQMAPQSTPPPPVNELWFIDAQAMFQNYANLRSFSKSNANEINTTIGGFVFGRKARKQVIHVLFAYAEDLTESNRQFLESSLSADIELVGNLNIDGQSQILPGGQFTLQLTSRMLENRSISEFLDMNVMFNNEHVLMEGASCVSRVGYEWSLRAGREQEDVKSAAERLSMASFRFTYLNAEHGLVIREQKPEAAQQKYLDKFSKGAVPYKDVIEFTAMQSLTRDTSNDTEDQKLVPTVKVTKDNKHFTRLVTIGEVVFPAFFGDSSLDLYKRSREAFNRRANNTMMVTVNGIRAGRGVTTTTSATYLPPGWVSLLHLQLPTKWTDNEQRNYRIRLHKLFNLPSSKPVLRLSQALALHSESARLTNKKLIREPHLSITNYQPVGEITTVNGPYNYHHYMQDGIDDSGWGCAYRSFQTIWSWFILNGYTDKPVPSHREIQQALVDIQDKQAKFVGSRQWIGSTEISFVLNELLKLECRFIATNSGAEVVERVRELARHFETSGTPVMIGGNMLAHTILGVDFNDTTGETKFLVLDPHYTGSEDIKTITSKGWCAWKPASFWSKDHFYNMVLPQPPSDAI.

The tract at residues 1 to 22 (MTNSQTVSLIGPTQMAPQSTPP) is disordered. Active-site residues include Cys421, Asp545, and His547.

Belongs to the peptidase C78 family. As to quaternary structure, interacts with odr-4. Expressed in head and tail neurons. Expressed in the amphid head neurons ADL, ASI, ASH, ASJ, ASG, ADF, ASK, AWA, AWB, AWC, and in two tail neurons, the phasmid tail neurons PHA and PHB.

The protein resides in the endoplasmic reticulum membrane. It is found in the cytoplasm. The protein localises to the perinuclear region. Its function is as follows. Thiol protease which recognizes and hydrolyzes the peptide bond at the C-terminal Gly of ufm-1, a ubiquitin-like modifier protein bound to a number of target proteins. Required, with oct-4, for the localization of a subset of 7 transmembrane domain odorant receptors, including odr-10, to the cilia of olfactory neurons AWA and AWC. Operates in aggregation behavior, and responses to oxygen levels. The chain is Ufm1-specific protease from Caenorhabditis elegans.